Here is a 254-residue protein sequence, read N- to C-terminus: Large ribosomal subunit protein uL2 (254 aa).

Belongs to the universal ribosomal protein uL2 family. In terms of assembly, component of the large ribosomal subunit. Mature ribosomes consist of a small (40S) and a large (60S) subunit. The 40S subunit contains about 32 different proteins and 1 molecule of RNA (18S). The 60S subunit contains 45 different proteins and 3 molecules of RNA (25S, 5.8S and 5S).

It is found in the cytoplasm. In terms of biological role, component of the ribosome, a large ribonucleoprotein complex responsible for the synthesis of proteins in the cell. The small ribosomal subunit (SSU) binds messenger RNAs (mRNAs) and translates the encoded message by selecting cognate aminoacyl-transfer RNA (tRNA) molecules. The large subunit (LSU) contains the ribosomal catalytic site termed the peptidyl transferase center (PTC), which catalyzes the formation of peptide bonds, thereby polymerizing the amino acids delivered by tRNAs into a polypeptide chain. The nascent polypeptides leave the ribosome through a tunnel in the LSU and interact with protein factors that function in enzymatic processing, targeting, and the membrane insertion of nascent chains at the exit of the ribosomal tunnel. The polypeptide is Large ribosomal subunit protein uL2 (Candida albicans (strain SC5314 / ATCC MYA-2876) (Yeast)).